The following is a 471-amino-acid chain: 6-phosphogluconate dehydrogenase, decarboxylating (471 aa).

NADP(+) is bound by residues 10–15 (GLAVMG), 33–35 (NRT), 75–77 (VKA), and Asn103. Residues Asn103 and 129–131 (SGG) contribute to the substrate site. Lys183 serves as the catalytic Proton acceptor. 186–187 (HN) serves as a coordination point for substrate. Residue Glu190 is the Proton donor of the active site. Positions 191, 263, 290, 449, and 455 each coordinate substrate.

The protein belongs to the 6-phosphogluconate dehydrogenase family. Homodimer.

The catalysed reaction is 6-phospho-D-gluconate + NADP(+) = D-ribulose 5-phosphate + CO2 + NADPH. It functions in the pathway carbohydrate degradation; pentose phosphate pathway; D-ribulose 5-phosphate from D-glucose 6-phosphate (oxidative stage): step 3/3. In terms of biological role, catalyzes the oxidative decarboxylation of 6-phosphogluconate to ribulose 5-phosphate and CO(2), with concomitant reduction of NADP to NADPH. The sequence is that of 6-phosphogluconate dehydrogenase, decarboxylating (gnd) from Synechococcus elongatus (strain ATCC 33912 / PCC 7942 / FACHB-805) (Anacystis nidulans R2).